The sequence spans 579 residues: Protein disulfide isomerase-like 1-3 (579 aa).

The first 25 residues, 1 to 25 (MASSSTSISLLLFVSFILLLVNSRA), serve as a signal peptide directing secretion. A glycan (N-linked (GlcNAc...) asparagine) is linked at asparagine 27. 2 stretches are compositionally biased toward basic and acidic residues: residues 44–69 (EESK…RDFE) and 80–89 (EFHHGDHGYE). A disordered region spans residues 44 to 91 (EESKEQSHGGGSYHEEEHDHQHRDFENYDDLEQGGGEFHHGDHGYEEE). The Thioredoxin 1 domain maps to 81 to 204 (FHHGDHGYEE…IVTWLKKKAS (124 aa)). 2 N-linked (GlcNAc...) asparagine glycosylation sites follow: asparagine 108 and asparagine 115. Active-site nucleophile residues include cysteine 128 and cysteine 131. A disulfide bond links cysteine 128 and cysteine 131. Asparagine 209, asparagine 293, asparagine 313, and asparagine 338 each carry an N-linked (GlcNAc...) asparagine glycan. One can recognise a Thioredoxin 2 domain in the interval 416–546 (DFLADKLKPF…LYKFLKKHAS (131 aa)). Residues cysteine 467 and cysteine 470 each act as nucleophile in the active site. A disulfide bond links cysteine 467 and cysteine 470. Asparagine 520 carries an N-linked (GlcNAc...) asparagine glycan. The segment at 558 to 579 (EPVISTMKSDEKIEGDSSKDEL) is disordered. Residues 565–579 (KSDEKIEGDSSKDEL) are compositionally biased toward basic and acidic residues. The short motif at 576 to 579 (KDEL) is the Prevents secretion from ER element.

The protein belongs to the protein disulfide isomerase family. As to expression, widely expressed.

The protein resides in the endoplasmic reticulum lumen. The catalysed reaction is Catalyzes the rearrangement of -S-S- bonds in proteins.. In terms of biological role, acts as a protein-folding catalyst that interacts with nascent polypeptides to catalyze the formation, isomerization, and reduction or oxidation of disulfide bonds. This is Protein disulfide isomerase-like 1-3 (PDIL1-3) from Arabidopsis thaliana (Mouse-ear cress).